Consider the following 167-residue polypeptide: Ubiquitin-conjugating enzyme E2 2 (167 aa).

A UBC core domain is found at P4–E150. C88 functions as the Glycyl thioester intermediate in the catalytic mechanism. Residues S148 to E167 are disordered. Residues D151 to E167 are compositionally biased toward acidic residues.

Belongs to the ubiquitin-conjugating enzyme family.

Its subcellular location is the cytoplasm. It is found in the nucleus. The catalysed reaction is S-ubiquitinyl-[E1 ubiquitin-activating enzyme]-L-cysteine + [E2 ubiquitin-conjugating enzyme]-L-cysteine = [E1 ubiquitin-activating enzyme]-L-cysteine + S-ubiquitinyl-[E2 ubiquitin-conjugating enzyme]-L-cysteine.. Its pathway is protein modification; protein ubiquitination. In terms of biological role, catalyzes the covalent attachment of ubiquitin to other proteins. Plays a role in transcription regulation by catalyzing the monoubiquitination of histone H2B to form H2BK123ub1. H2BK123ub1 gives a specific tag for epigenetic transcriptional activation and is also a prerequisite for H3K4me and H3K79me formation. Also involved in postreplication repair of UV-damaged DNA, in N-end rule-dependent protein degradation and in sporulation. The sequence is that of Ubiquitin-conjugating enzyme E2 2 (UBC2) from Candida glabrata (strain ATCC 2001 / BCRC 20586 / JCM 3761 / NBRC 0622 / NRRL Y-65 / CBS 138) (Yeast).